The following is a 714-amino-acid chain: Fatty acid oxidation complex subunit alpha (714 aa).

The enoyl-CoA hydratase stretch occupies residues 1 to 190 (MDTVSAFKLE…KAGLVDEVVP (190 aa)). The interval 306–714 (GSLRSVAVLG…TFWPADERLT (409 aa)) is 3-hydroxyacyl-CoA dehydrogenase.

It in the N-terminal section; belongs to the enoyl-CoA hydratase/isomerase family. This sequence in the central section; belongs to the 3-hydroxyacyl-CoA dehydrogenase family. Heterotetramer of two alpha chains (FadJ) and two beta chains (FadI).

It is found in the cytoplasm. It catalyses the reaction a (3S)-3-hydroxyacyl-CoA = a (2E)-enoyl-CoA + H2O. The enzyme catalyses a 4-saturated-(3S)-3-hydroxyacyl-CoA = a (3E)-enoyl-CoA + H2O. The catalysed reaction is a (3S)-3-hydroxyacyl-CoA + NAD(+) = a 3-oxoacyl-CoA + NADH + H(+). It carries out the reaction (3S)-3-hydroxybutanoyl-CoA = (3R)-3-hydroxybutanoyl-CoA. Its pathway is lipid metabolism; fatty acid beta-oxidation. Catalyzes the formation of a hydroxyacyl-CoA by addition of water on enoyl-CoA. Also exhibits 3-hydroxyacyl-CoA epimerase and 3-hydroxyacyl-CoA dehydrogenase activities. In Klebsiella pneumoniae subsp. pneumoniae (strain ATCC 700721 / MGH 78578), this protein is Fatty acid oxidation complex subunit alpha.